The chain runs to 332 residues: Adenosine receptor A2b (332 aa).

The Extracellular segment spans residues 1–8 (MQLETQDA). Residues 9–33 (LYVALELVIAALAVAGNVLVCAAVG) traverse the membrane as a helical segment. Residues 34-43 (ASSALQTPTN) lie on the Cytoplasmic side of the membrane. The helical transmembrane segment at 44–67 (YFLVSLATADVAVGLFAIPFAITI) threads the bilayer. Residues 68–78 (SLGFCTDFHSC) are Extracellular-facing. Cys-78 and Cys-171 form a disulfide bridge. A helical membrane pass occupies residues 79–101 (LFLACFVLVLTQSSIFSLLAVAV). At 102–121 (DRYLAIRVPLRYKGLVTGTR) the chain is on the cytoplasmic side. The chain crosses the membrane as a helical span at residues 122–144 (ARGIIAVLWVLAFGIGLTPFLGW). Residues 145–178 (NSKDRATSNCTEPGDGITNKSCCPVKCLFENVVP) lie on the Extracellular side of the membrane. N-linked (GlcNAc...) asparagine glycans are attached at residues Asn-153 and Asn-163. Position 174 (Glu-174) interacts with adenosine. Residues 179–203 (MSYMVYFNFFGCVLPPLLIMMVIYI) traverse the membrane as a helical segment. Over 204–235 (KIFMVACKQLQHMELMEHSRTTLQREIHAAKS) the chain is Cytoplasmic. A helical membrane pass occupies residues 236-259 (LAMIVGIFALCWLPVHAINCITLF). Asn-254 contacts adenosine. The Extracellular segment spans residues 260–267 (HPALAKDK). A helical membrane pass occupies residues 268–291 (PKWVMNVAILLSHANSVVNPIVYA). Positions 279 and 280 each coordinate adenosine. Topologically, residues 292–332 (YRNRDFRYSFHRIISRYVLCQTDTKGGSGQAGGQSTFSLSL) are cytoplasmic. Cys-311 carries the S-palmitoyl cysteine lipid modification.

It belongs to the G-protein coupled receptor 1 family.

The protein localises to the cell membrane. In terms of biological role, receptor for adenosine. The activity of this receptor is mediated by G proteins which activate adenylyl cyclase. This is Adenosine receptor A2b (Adora2b) from Rattus norvegicus (Rat).